We begin with the raw amino-acid sequence, 103 residues long: Large ribosomal subunit protein uL24 (103 aa).

This sequence belongs to the universal ribosomal protein uL24 family. Part of the 50S ribosomal subunit.

Functionally, one of two assembly initiator proteins, it binds directly to the 5'-end of the 23S rRNA, where it nucleates assembly of the 50S subunit. One of the proteins that surrounds the polypeptide exit tunnel on the outside of the subunit. This chain is Large ribosomal subunit protein uL24, found in Agathobacter rectalis (strain ATCC 33656 / DSM 3377 / JCM 17463 / KCTC 5835 / VPI 0990) (Eubacterium rectale).